The chain runs to 614 residues: Protein NRT1/ PTR FAMILY 7.3 (614 aa).

The next 2 helical transmembrane spans lie at 41 to 61 (WVAG…FFGV) and 87 to 107 (WTGT…SYWG). Threonine 111 is modified (phosphothreonine). 9 helical membrane-spanning segments follow: residues 114 to 134 (IFQV…YMFL), 152 to 172 (MMEI…YGGY), 196 to 216 (IAFF…SNTI), 226 to 246 (WALG…LFLV), 355 to 375 (PIWL…SLFV), 390 to 410 (IPPA…IFLY), 435 to 455 (MGIG…VECY), 515 to 535 (LCMM…TMVV), and 559 to 579 (FYFL…ACAK). A disordered region spans residues 592–614 (MQDMSDDDYDTESEEEREKDSKV). A compositionally biased stretch (acidic residues) spans 593-606 (QDMSDDDYDTESEE).

The protein belongs to the major facilitator superfamily. Proton-dependent oligopeptide transporter (POT/PTR) (TC 2.A.17) family. High expression in roots. Barely detected in shoots. Expressed in root pericycle cells close to the xylem.

It is found in the cell membrane. In terms of biological role, low-affinity proton-dependent bidirectional nitrate transporter. Involved in nitrate loading into xylem and not in nitrate uptake. Not involved in histidine or dipeptides transport. This is Protein NRT1/ PTR FAMILY 7.3 (NPF7.3) from Arabidopsis thaliana (Mouse-ear cress).